A 302-amino-acid chain; its full sequence is Sulfate adenylyltransferase subunit 2 2 (302 aa).

Belongs to the PAPS reductase family. CysD subfamily. In terms of assembly, heterodimer composed of CysD, the smaller subunit, and CysN.

It catalyses the reaction sulfate + ATP + H(+) = adenosine 5'-phosphosulfate + diphosphate. Its pathway is sulfur metabolism; hydrogen sulfide biosynthesis; sulfite from sulfate: step 1/3. In terms of biological role, with CysN forms the ATP sulfurylase (ATPS) that catalyzes the adenylation of sulfate producing adenosine 5'-phosphosulfate (APS) and diphosphate, the first enzymatic step in sulfur assimilation pathway. APS synthesis involves the formation of a high-energy phosphoric-sulfuric acid anhydride bond driven by GTP hydrolysis by CysN coupled to ATP hydrolysis by CysD. This chain is Sulfate adenylyltransferase subunit 2 2, found in Alkalilimnicola ehrlichii (strain ATCC BAA-1101 / DSM 17681 / MLHE-1).